Consider the following 1079-residue polypeptide: MSDVELVKKMLRAVLQSSKHGVAMARLQGDYRALTGEMIPFRKFGHDTLESFLRSIPGVVRLERSITGEVMCFAGVCEETAHIAQLVARQKNVKKTGCSKLLNFQMRARTSHLFSHNVKPRLSLRQPSNMTHPGRGSVTSFYSTQRKLYSNDLPSSRAPAWQMNRKSPVPEKTSVVPSKINTNIKTPLKKTSGTAAQQKPVNRADVELVQGRIKQLLQKYSSGVWLSKIPQLYKSMFQEELHIIQEVEKWTHICTVEKPGSNNIVDRLVYPVLEPVPKASPVPVKSPCKQSPNTALLKQPTLTQKTTRTFRTLAINIPQSTPKPQTPLSPTSPNSTMIDFTLSETPKTQSLSPITPPSTPPAHQPLTTELKQKLRQLLNKYSQGLWAHGLPQLFQEAFGCAFPQYVLEDLSLLADTCMVEYPMPDNRKRAILYTLPCQVQTQPRSRPPPLVLPCTSNPHVPPLIIPTADFHSVFVIEINSTNNVVVRFAGGGYSKSLEVMEEEMQNFYNNIGAGLCLLSPKIGQLVAVASSDGAMLRAQVHQLSEDKVKVYFLDHGFFDLVSRKTLFQLRDQFMTLPFQATTCQLAGLEPFSTDPVVLKTLQSLAVGRSLLAEIVEREDTPLVVLYDTSENDDVNVTAMCLKALQDKSMENPLQVNSVYTNVCVTNVCSDGSVYCQLPSRGQAKLKDIMDKIEAHFISQLTWELLVSRPFCGKVCLAKYKGKWARAEIINLHGSHVLDILFLDLGLPASLEVSELREIPPIFLKELITIPPQAIKCLLEDLNVDRAVWPPEAVLWLRETVHNKAPSCMKIVKLDETRTVHIYLFCGNEAQDIHDSVNRQLASCPFWKQDVYANKINKASELFLPDAGEPSGSSPAPSNALTLPPQLNLPLVGQNMDVFVSVACHPGHFVLQPWQDLYKLVVLMGEMVLFYNKQEVTTVDIQKNNVYAAKIDNNWHRVLVKGLLTNGLVSVYELDYGKYELINYTQLQPLIEEFRQLPFQGISAQLADVKKEVWCEEASMVFRNHVEKKPLVAQIESVEEGEWPWERKISVYLVDTTQENKDIWIHNIMKEFLDEISRDA.

Residues 3–76 (DVELVKKMLR…TGEVMCFAGV (74 aa)) enclose the HTH OST-type 1 domain. Residues 153-175 (LPSSRAPAWQMNRKSPVPEKTSV) are disordered. HTH OST-type domains follow at residues 205–270 (DVEL…RLVY) and 366–434 (LTTE…ILYT). Tudor domains follow at residues 519–576 (SPKI…FMTL) and 708–765 (RPFC…FLKE).

The protein belongs to the TDRD7 family.

The protein resides in the cytoplasm. Its function is as follows. Component of specific cytoplasmic RNA granules involved in post-transcriptional regulation of specific genes: probably acts by binding to specific mRNAs and regulating their translation. Probably required during spermatogenesis. Required for structural integrity of granules in primordial germ cells (PGCs). This chain is Tudor domain-containing protein 7A (tdrd7a), found in Danio rerio (Zebrafish).